Here is a 595-residue protein sequence, read N- to C-terminus: Trafficking protein particle complex subunit 14 (595 aa).

2 disordered regions span residues 84-111 (ASVS…ECVE) and 494-513 (SNPP…SSPA).

In terms of assembly, component of the multisubunit TRAPP II complex, which includes at least TRAPPC1, TRAPPC2, TRAPPC2L, TRAPPC3, TRAPPC4, TRAPPC5, TRAPPC6A/B, TRAPPC9, TRAPPC10 and TRAPPC14. TRAPPC9, TRAPPC10 and TRAPPC14 are specific subunits of the TRAPP II complex. Interacts with alpha-tubulin during mitosis.

The protein localises to the cytoplasm. It localises to the cytoskeleton. It is found in the spindle. Its subcellular location is the vesicle. The protein resides in the midbody. Specific subunit of the TRAPP (transport protein particle) II complex, a highly conserved vesicle tethering complex that functions in late Golgi trafficking as a membrane tether. TRAPP II complex also has GEF activity toward RAB1A. TRAPPC14 is required for ciliogenesis. This Danio rerio (Zebrafish) protein is Trafficking protein particle complex subunit 14 (trappc14).